A 606-amino-acid chain; its full sequence is RUN and FYVE domain-containing protein 2 (606 aa).

In terms of domain architecture, RUN spans 37–169 (DSDYPPLQQF…IDANLCVKGE (133 aa)). Positions 210-534 (EELNRQLNST…IKEANKALQG (325 aa)) form a coiled coil. The segment at 540-598 (DKEATHCKLCEKEFSLSKRKHHCRNCGEIFCNACSDNELPLPSSPKPVRVCDSCHALLI) adopts an FYVE-type zinc-finger fold. Positions 546, 549, 562, 565, 570, 573, 590, and 593 each coordinate Zn(2+).

Interacts with BMX. In terms of tissue distribution, expressed in brain, lung and testis.

The protein localises to the nucleus. The protein is RUN and FYVE domain-containing protein 2 (RUFY2) of Homo sapiens (Human).